The chain runs to 548 residues: Folylpolyglutamate synthase (548 aa).

130–133 contacts ATP; it reads GKGS. 3 residues coordinate Mg(2+): Ser-157, Glu-234, and His-262. ATP contacts are provided by Arg-382 and Asp-396.

Belongs to the folylpolyglutamate synthase family. The cofactor is a monovalent cation.

It is found in the mitochondrion inner membrane. The protein resides in the mitochondrion matrix. It localises to the cytoplasm. It catalyses the reaction (6S)-5,6,7,8-tetrahydrofolyl-(gamma-L-Glu)(n) + L-glutamate + ATP = (6S)-5,6,7,8-tetrahydrofolyl-(gamma-L-Glu)(n+1) + ADP + phosphate + H(+). It functions in the pathway cofactor biosynthesis; tetrahydrofolylpolyglutamate biosynthesis. Catalyzes conversion of folates to polyglutamate derivatives allowing concentration of folate compounds in the cell and the intracellular retention of these cofactors, which are important substrates for most of the folate-dependent enzymes that are involved in one-carbon transfer reactions involved in purine, pyrimidine and amino acid synthesis. Required for methionine synthesis and maintenance of intact mitochondrial DNA. Involved in telomere maintenance. The chain is Folylpolyglutamate synthase from Saccharomyces cerevisiae (strain RM11-1a) (Baker's yeast).